Here is a 236-residue protein sequence, read N- to C-terminus: E3 ubiquitin-protein ligase ATL41 (236 aa).

Residues 31–51 (IMLAAVASLSGVILIVFALHL) traverse the membrane as a helical segment. The segment at 108-150 (CAVCLSVLKEQDKARELPNCKHIFHVDCVDTWLTTCSTCPVCR) adopts an RING-type; atypical zinc-finger fold.

Belongs to the RING-type zinc finger family. ATL subfamily.

The protein resides in the membrane. The enzyme catalyses S-ubiquitinyl-[E2 ubiquitin-conjugating enzyme]-L-cysteine + [acceptor protein]-L-lysine = [E2 ubiquitin-conjugating enzyme]-L-cysteine + N(6)-ubiquitinyl-[acceptor protein]-L-lysine.. It participates in protein modification; protein ubiquitination. E3 ubiquitin-protein ligase able to catalyze polyubiquitination with ubiquitin-conjugating enzyme E2 UBC8, UBC10, UBC11, UBC28, UBC29, UBC30, UBC35 and UBC36 in vitro. The protein is E3 ubiquitin-protein ligase ATL41 (ATL41) of Arabidopsis thaliana (Mouse-ear cress).